The following is a 36-amino-acid chain: U14-ctenitoxin-Co1b (36 aa).

As to expression, expressed by the venom gland.

The protein localises to the secreted. Functionally, not toxic to mice by intracerebroventricular injection. This Ctenus ornatus (Brazilian spider) protein is U14-ctenitoxin-Co1b.